Reading from the N-terminus, the 231-residue chain is Very-long-chain (3R)-3-hydroxyacyl-CoA dehydratase 4 (231 aa).

At 1–19 (MGPVALPTWLQPRYRKNAY) the chain is on the cytoplasmic side. Residues 20–40 (LFIYYLIQFCGHSWIFTNMTV) form a helical membrane-spanning segment. The Lumenal segment spans residues 41–56 (RFFSFGKDSMVDTFYA). The chain crosses the membrane as a helical span at residues 57 to 77 (IGLVMQLCQSISLLELLHIYV). At 78-112 (GIESNHLLPRILQLTERIIVLFMVITSQEEVQEKY) the chain is on the cytoplasmic side. The helical transmembrane segment at 113–133 (VVCVLFIFRNLLDMVRYTYSM) threads the bilayer. The Lumenal segment spans residues 134 to 135 (LS). The chain crosses the membrane as a helical span at residues 136–156 (VIGISYAVLTWFSQTLWMPIY). Y156 is a catalytic residue. P157 is a topological domain (cytoplasmic). The chain crosses the membrane as a helical span at residues 158–178 (LCVLAEAFTIYQSLPYFESFG). E163 is an active-site residue. Residues 179–189 (TYSTKLPFDLS) are Lumenal-facing. The helical transmembrane segment at 190–210 (FYFPYVLKIYLMMLFVGMYFT) threads the bilayer. Topologically, residues 211–231 (YNHLYSERRDILRVFPNKKKM) are cytoplasmic.

The protein belongs to the very long-chain fatty acids dehydratase HACD family. As to quaternary structure, may interact with enzymes of the ELO family (including ELOVL1); with those enzymes that mediate condensation, the first of the four steps of the reaction cycle responsible for fatty acids elongation, may be part of a larger fatty acids elongase complex.

It localises to the endoplasmic reticulum membrane. It catalyses the reaction a very-long-chain (3R)-3-hydroxyacyl-CoA = a very-long-chain (2E)-enoyl-CoA + H2O. The catalysed reaction is (3R)-hydroxyhexadecanoyl-CoA = (2E)-hexadecenoyl-CoA + H2O. The protein operates within lipid metabolism; fatty acid biosynthesis. Functionally, catalyzes the third of the four reactions of the long-chain fatty acids elongation cycle. This endoplasmic reticulum-bound enzymatic process, allows the addition of two carbons to the chain of long- and very long-chain fatty acids/VLCFAs per cycle. This enzyme catalyzes the dehydration of the 3-hydroxyacyl-CoA intermediate into trans-2,3-enoyl-CoA, within each cycle of fatty acid elongation. Thereby, it participates in the production of VLCFAs of different chain lengths that are involved in multiple biological processes as precursors of membrane lipids and lipid mediators. In Bos taurus (Bovine), this protein is Very-long-chain (3R)-3-hydroxyacyl-CoA dehydratase 4.